A 563-amino-acid chain; its full sequence is Arginine--tRNA ligase (563 aa).

Positions P121–H131 match the 'HIGH' region motif.

Belongs to the class-I aminoacyl-tRNA synthetase family. As to quaternary structure, monomer.

The protein localises to the cytoplasm. It carries out the reaction tRNA(Arg) + L-arginine + ATP = L-arginyl-tRNA(Arg) + AMP + diphosphate. The polypeptide is Arginine--tRNA ligase (Streptococcus pneumoniae (strain Hungary19A-6)).